Here is a 567-residue protein sequence, read N- to C-terminus: 2-succinyl-5-enolpyruvyl-6-hydroxy-3-cyclohexene-1-carboxylate synthase (567 aa).

It belongs to the TPP enzyme family. MenD subfamily. As to quaternary structure, homodimer. It depends on Mg(2+) as a cofactor. Mn(2+) is required as a cofactor. Thiamine diphosphate serves as cofactor.

The enzyme catalyses isochorismate + 2-oxoglutarate + H(+) = 5-enolpyruvoyl-6-hydroxy-2-succinyl-cyclohex-3-ene-1-carboxylate + CO2. The protein operates within quinol/quinone metabolism; 1,4-dihydroxy-2-naphthoate biosynthesis; 1,4-dihydroxy-2-naphthoate from chorismate: step 2/7. It participates in quinol/quinone metabolism; menaquinone biosynthesis. Functionally, catalyzes the thiamine diphosphate-dependent decarboxylation of 2-oxoglutarate and the subsequent addition of the resulting succinic semialdehyde-thiamine pyrophosphate anion to isochorismate to yield 2-succinyl-5-enolpyruvyl-6-hydroxy-3-cyclohexene-1-carboxylate (SEPHCHC). The chain is 2-succinyl-5-enolpyruvyl-6-hydroxy-3-cyclohexene-1-carboxylate synthase from Yersinia pestis bv. Antiqua (strain Antiqua).